Consider the following 644-residue polypeptide: Subversion of eukaryotic traffic protein A (644 aa).

The glucosyltransferase stretch occupies residues 1–400 (MYKIYSYLGW…FHTLLSQVSD (400 aa)). The interval 401-644 (PVNPTAHELK…EYDNNHGLRI (244 aa)) is ptdIns(3)P-binding and localization domain.

Post-translationally, ubiquitinated and polyubiquitinated when ectopically produced in both yeast and mammalian cells; however it is unsure if this modification occurs during the L.pneumophila infection of host cells.

It localises to the secreted. Its function is as follows. Secreted effector that interferes with vesicular trafficking of host cells. Possesses glucohydrolase and mono-O-glucosyltransferase activity by using UDP-glucose as a sugar donor substrate. Is able to glucosylate histones H4 and H3.1 in vitro, but it is unlikely that histones are the natural substrates for SetA. May glycosylate a component of the host cell vesicle trafficking machinery during L.pneumophila infection. Binds with high specificity to phosphatidylinositol 3-phosphate (PtdIns(3)P), (with a dissociation constant value of 809 nM), which guides SetA to the cytosolic leaflet of the early phagosome of the host cell. The protein is Subversion of eukaryotic traffic protein A (setA) of Legionella pneumophila subsp. pneumophila (strain Philadelphia 1 / ATCC 33152 / DSM 7513).